A 423-amino-acid chain; its full sequence is Serine hydroxymethyltransferase (423 aa).

(6S)-5,6,7,8-tetrahydrofolate contacts are provided by residues L120 and 124 to 126; that span reads GHL. An N6-(pyridoxal phosphate)lysine modification is found at K229. 353 to 355 contacts (6S)-5,6,7,8-tetrahydrofolate; that stretch reads SPF.

Belongs to the SHMT family. As to quaternary structure, homodimer. Pyridoxal 5'-phosphate serves as cofactor.

The protein localises to the cytoplasm. The enzyme catalyses (6R)-5,10-methylene-5,6,7,8-tetrahydrofolate + glycine + H2O = (6S)-5,6,7,8-tetrahydrofolate + L-serine. It functions in the pathway one-carbon metabolism; tetrahydrofolate interconversion. It participates in amino-acid biosynthesis; glycine biosynthesis; glycine from L-serine: step 1/1. Its function is as follows. Catalyzes the reversible interconversion of serine and glycine with tetrahydrofolate (THF) serving as the one-carbon carrier. This reaction serves as the major source of one-carbon groups required for the biosynthesis of purines, thymidylate, methionine, and other important biomolecules. Also exhibits THF-independent aldolase activity toward beta-hydroxyamino acids, producing glycine and aldehydes, via a retro-aldol mechanism. The chain is Serine hydroxymethyltransferase from Prochlorococcus marinus subsp. pastoris (strain CCMP1986 / NIES-2087 / MED4).